We begin with the raw amino-acid sequence, 151 residues long: Putative pre-16S rRNA nuclease (151 aa).

This sequence belongs to the YqgF nuclease family.

The protein localises to the cytoplasm. Could be a nuclease involved in processing of the 5'-end of pre-16S rRNA. This is Putative pre-16S rRNA nuclease from Thermosynechococcus vestitus (strain NIES-2133 / IAM M-273 / BP-1).